The following is a 461-amino-acid chain: Porin AaxA (461 aa).

Residues 1–22 (MSFRSVLLTALLSLSFTTTMQA) form the signal peptide.

The protein belongs to the OprB family.

The protein resides in the cell outer membrane. Its function is as follows. Facilitates L-arginine uptake, as part of the AaxABC system. The arginine uptake by the bacterium in the macrophage may be a virulence factor against the host innate immune response. The sequence is that of Porin AaxA (aaxA) from Chlamydia trachomatis serovar A (strain ATCC VR-571B / DSM 19440 / HAR-13).